The chain runs to 315 residues: MSCATKPIIKPSSMATNSCLISLPPLFATTTKSKSFAYPYLSNTLKPIKLLHLSCTYSPCILSPKKKTSVSALQEEENTLILDGQGQESGDLFNFEPSGEETEEEGFVEAVGDAGESDEVEADEEEEEFQEPPEDAKLFVGNLPYDVDSEGLARLFEQAGVVEIAEVIYNRDTDQSRGFGFVTMSTVEEAEKAVEMYNRYDVNGRLLTVNKAARRGERPERPPRTFEQSYRIYVGNIPWGIDDARLEQLFSEHGKVVSARVVYDRETGRSRGFGFVTMASEAEMSDAIANLDGQSLDGRTIRVNVAEDRSRRNTF.

Residues 1 to 71 (MSCATKPIIK…LSPKKKTSVS (71 aa)) constitute a chloroplast transit peptide. Positions 114–133 (AGESDEVEADEEEEEFQEPP) are disordered. Acidic residues predominate over residues 115–133 (GESDEVEADEEEEEFQEPP). RRM domains are found at residues 136–214 (AKLF…KAAR) and 230–308 (YRIY…VAED).

The protein resides in the plastid. Its subcellular location is the chloroplast. Its function is as follows. Could be involved in splicing and/or processing of chloroplast RNA's. This is 31 kDa ribonucleoprotein, chloroplastic from Nicotiana sylvestris (Wood tobacco).